Here is a 288-residue protein sequence, read N- to C-terminus: Cyclin-dependent kinase 2 homolog (288 aa).

A Protein kinase domain is found at 4-284; sequence YHGLEKIGEG…AKQALEHAYF (281 aa). ATP contacts are provided by residues 10–18 and lysine 32; that span reads IGEGTYGVV. Phosphothreonine is present on threonine 14. Tyrosine 15 carries the post-translational modification Phosphotyrosine. Catalysis depends on aspartate 125, which acts as the Proton acceptor. The residue at position 158 (threonine 158) is a Phosphothreonine.

Belongs to the protein kinase superfamily. CMGC Ser/Thr protein kinase family. CDC2/CDKX subfamily. As to quaternary structure, may form a complex composed of at least the catalytic subunit CRK2 and a cyclin. It depends on Mg(2+) as a cofactor.

Its subcellular location is the cytoplasm. It catalyses the reaction L-seryl-[protein] + ATP = O-phospho-L-seryl-[protein] + ADP + H(+). It carries out the reaction L-threonyl-[protein] + ATP = O-phospho-L-threonyl-[protein] + ADP + H(+). The enzyme catalyses [DNA-directed RNA polymerase] + ATP = phospho-[DNA-directed RNA polymerase] + ADP + H(+). With respect to regulation, phosphorylation at Thr-14 or Tyr-15 inactivates the enzyme, while phosphorylation at Thr-158 activates it. Functionally, serine/threonine-protein kinase. Involved in the control of the cell cycle. Required for entry into S-phase and mitosis. Probable component of the kinase complex that phosphorylates the repetitive C-terminus of RNA polymerase II. The polypeptide is Cyclin-dependent kinase 2 homolog (Plasmodium vivax).